We begin with the raw amino-acid sequence, 61 residues long: Small ribosomal subunit protein uS14 (61 aa).

Residues Cys-24, Cys-27, Cys-40, and Cys-43 each contribute to the Zn(2+) site.

This sequence belongs to the universal ribosomal protein uS14 family. Zinc-binding uS14 subfamily. As to quaternary structure, part of the 30S ribosomal subunit. Contacts proteins S3 and S10. Zn(2+) is required as a cofactor.

In terms of biological role, binds 16S rRNA, required for the assembly of 30S particles and may also be responsible for determining the conformation of the 16S rRNA at the A site. This chain is Small ribosomal subunit protein uS14, found in Thermus aquaticus.